Reading from the N-terminus, the 230-residue chain is Sugar fermentation stimulation protein homolog (230 aa).

The protein belongs to the SfsA family.

This chain is Sugar fermentation stimulation protein homolog, found in Clostridium kluyveri (strain NBRC 12016).